The primary structure comprises 580 residues: Phosphomethylpyrimidine synthase (580 aa).

The segment at 1–58 (MTPTQNEIHPKHSYSPIRKHGLEVPETEIALDDSPSGPNEPFRIYRTRGPETDPTLGL) is disordered. Substrate is bound by residues Asn180, Met209, Tyr238, His274, 294 to 296 (SRG), 335 to 338 (DGLR), and Glu374. His378 provides a ligand contact to Zn(2+). Tyr401 serves as a coordination point for substrate. His442 contacts Zn(2+). [4Fe-4S] cluster-binding residues include Cys522, Cys525, and Cys530. A disordered region spans residues 554–580 (VGASDSTEGMKEKSREFVAGGGEVYRE).

Belongs to the ThiC family. The cofactor is [4Fe-4S] cluster.

It carries out the reaction 5-amino-1-(5-phospho-beta-D-ribosyl)imidazole + S-adenosyl-L-methionine = 4-amino-2-methyl-5-(phosphooxymethyl)pyrimidine + CO + 5'-deoxyadenosine + formate + L-methionine + 3 H(+). Its pathway is cofactor biosynthesis; thiamine diphosphate biosynthesis. Its function is as follows. Catalyzes the synthesis of the hydroxymethylpyrimidine phosphate (HMP-P) moiety of thiamine from aminoimidazole ribotide (AIR) in a radical S-adenosyl-L-methionine (SAM)-dependent reaction. This is Phosphomethylpyrimidine synthase from Corynebacterium efficiens (strain DSM 44549 / YS-314 / AJ 12310 / JCM 11189 / NBRC 100395).